Reading from the N-terminus, the 261-residue chain is Type III pantothenate kinase (261 aa).

Residue 6 to 13 (DAGNSNIT) coordinates ATP. Substrate contacts are provided by residues tyrosine 100 and 107 to 110 (GADR). Aspartate 109 (proton acceptor) is an active-site residue. Residue aspartate 129 participates in K(+) binding. Threonine 132 serves as a coordination point for ATP. Threonine 184 serves as a coordination point for substrate.

It belongs to the type III pantothenate kinase family. In terms of assembly, homodimer. Requires NH4(+) as cofactor. K(+) serves as cofactor.

The protein resides in the cytoplasm. The catalysed reaction is (R)-pantothenate + ATP = (R)-4'-phosphopantothenate + ADP + H(+). It functions in the pathway cofactor biosynthesis; coenzyme A biosynthesis; CoA from (R)-pantothenate: step 1/5. In terms of biological role, catalyzes the phosphorylation of pantothenate (Pan), the first step in CoA biosynthesis. The polypeptide is Type III pantothenate kinase (Solibacter usitatus (strain Ellin6076)).